A 192-amino-acid chain; its full sequence is Flavin prenyltransferase UbiX (192 aa).

Residues 10–12 (GAS), S36, 92–95 (SMTT), and R127 contribute to the FMN site. Dimethylallyl phosphate is bound by residues Y157 and K173.

It belongs to the UbiX/PAD1 family.

It carries out the reaction dimethylallyl phosphate + FMNH2 = prenylated FMNH2 + phosphate. In terms of biological role, flavin prenyltransferase that catalyzes the synthesis of the prenylated FMN cofactor (prenyl-FMN) for 4-hydroxy-3-polyprenylbenzoic acid decarboxylase UbiD. The prenyltransferase is metal-independent and links a dimethylallyl moiety from dimethylallyl monophosphate (DMAP) to the flavin N5 and C6 atoms of FMN. The chain is Flavin prenyltransferase UbiX from Chlamydia pneumoniae (Chlamydophila pneumoniae).